A 461-amino-acid chain; its full sequence is Fumarate hydratase class II (461 aa).

Residues 98 to 100 (SGT), 129 to 132 (HPND), 139 to 141 (SSN), and Thr-187 each bind substrate. His-188 functions as the Proton donor/acceptor in the catalytic mechanism. The active site involves Ser-318. Residues Ser-319 and 324–326 (KVN) each bind substrate.

Belongs to the class-II fumarase/aspartase family. Fumarase subfamily. As to quaternary structure, homotetramer.

It is found in the cytoplasm. The catalysed reaction is (S)-malate = fumarate + H2O. It participates in carbohydrate metabolism; tricarboxylic acid cycle; (S)-malate from fumarate: step 1/1. In terms of biological role, involved in the TCA cycle. Catalyzes the stereospecific interconversion of fumarate to L-malate. This is Fumarate hydratase class II from Rickettsia prowazekii (strain Madrid E).